Here is a 372-residue protein sequence, read N- to C-terminus: Probable O-methyltransferase 2 (372 aa).

The S-adenosyl-L-methionine site is built by G216, D259, and K273. The active-site Proton acceptor is the H277.

This sequence belongs to the class I-like SAM-binding methyltransferase superfamily. Cation-independent O-methyltransferase family. COMT subfamily. Homodimer. As to expression, expressed predominantly in root hairs.

Functionally, O-methyltransferase of unknown substrate specificity. Not active on resorcinol, orcinol, guaiacol, eugenol, ferulic acid, p-coumaric acid, catechol, caffeic acid or monomethyl ethers of resorcinol or orcinol. The sequence is that of Probable O-methyltransferase 2 (OMT2) from Sorghum bicolor (Sorghum).